The chain runs to 1187 residues: ATP-dependent DNA helicase MPH1 (1187 aa).

The region spanning 144 to 311 (IVERAFYDNL…QIIDNLNISK (168 aa)) is the Helicase ATP-binding domain. ATP is bound at residue 157–164 (LPTGLGKT). The short motif at 259 to 262 (DEAH) is the DEAH box element. The 196-residue stretch at 486 to 681 (ELDDFFKNHE…FIQLRPQHRM (196 aa)) folds into the Helicase C-terminal domain. 3 disordered regions span residues 542–576 (VENFGKKKQKGQTKKKKDERPSTRSSSENAQMTGM), 781–848 (DKLV…NNQV), and 941–1003 (PEKP…LGVK). Basic residues predominate over residues 547 to 556 (KKKQKGQTKK). A compositionally biased stretch (polar residues) spans 564-576 (TRSSSENAQMTGM). A compositionally biased stretch (basic and acidic residues) spans 781–817 (DKLVDSDSESEVDKENENVIQEVDKSKNQEQNDHIIT). Residues 822–848 (TEQSVAGNTKSTTNGTSYSEPENNNQV) show a composition bias toward polar residues. The span at 967-977 (SNSISIPSSTT) shows a compositional bias: low complexity. Residues 980–989 (SHNEVTRKVV) are compositionally biased toward basic and acidic residues.

The protein belongs to the DEAD box helicase family. DEAH subfamily. FANCM sub-subfamily. As to quaternary structure, interacts with the MHF histone-fold complex to form the FANCM-MHF complex.

It is found in the nucleus. It carries out the reaction ATP + H2O = ADP + phosphate + H(+). Its function is as follows. ATP-dependent DNA helicase involved in DNA damage repair by homologous recombination and in genome maintenance. Capable of unwinding D-loops. Plays a role in limiting crossover recombinants during mitotic DNA double-strand break (DSB) repair. Component of a FANCM-MHF complex which promotes gene conversion at blocked replication forks, probably by reversal of the stalled fork. This chain is ATP-dependent DNA helicase MPH1, found in Candida albicans (strain SC5314 / ATCC MYA-2876) (Yeast).